We begin with the raw amino-acid sequence, 592 residues long: Arginine--tRNA ligase (592 aa).

The short motif at 129–139 is the 'HIGH' region element; it reads ANPTGPLHVGH.

It belongs to the class-I aminoacyl-tRNA synthetase family. Monomer.

It is found in the cytoplasm. It catalyses the reaction tRNA(Arg) + L-arginine + ATP = L-arginyl-tRNA(Arg) + AMP + diphosphate. This is Arginine--tRNA ligase from Dichelobacter nodosus (strain VCS1703A).